The chain runs to 281 residues: Pantothenate synthetase (281 aa).

30–37 (MGYLHDGH) contacts ATP. The active-site Proton donor is the histidine 37. Glutamine 61 is a (R)-pantoate binding site. Glutamine 61 contributes to the beta-alanine binding site. An ATP-binding site is contributed by 147 to 150 (GEKD). Glutamine 153 serves as a coordination point for (R)-pantoate. ATP contacts are provided by residues isoleucine 176 and 184–187 (KSSR).

Belongs to the pantothenate synthetase family. As to quaternary structure, homodimer.

It is found in the cytoplasm. The catalysed reaction is (R)-pantoate + beta-alanine + ATP = (R)-pantothenate + AMP + diphosphate + H(+). It participates in cofactor biosynthesis; (R)-pantothenate biosynthesis; (R)-pantothenate from (R)-pantoate and beta-alanine: step 1/1. Its function is as follows. Catalyzes the condensation of pantoate with beta-alanine in an ATP-dependent reaction via a pantoyl-adenylate intermediate. The chain is Pantothenate synthetase from Clostridium acetobutylicum (strain ATCC 824 / DSM 792 / JCM 1419 / IAM 19013 / LMG 5710 / NBRC 13948 / NRRL B-527 / VKM B-1787 / 2291 / W).